The primary structure comprises 545 residues: MATNYIFVTGGVVSSLGKGIAAASLAAILEARGLNVTIMKLDPYINVDPGTMSPTQHGEVFVTQDGAETDLDLGHYERFIRTKMTKRNNFTTGKIYSEVLRKERRGDYLGATIQVIPHITNEIKDRVIAGAQGHDVVIVEVGGTVGDIESLPFLEALRQLAVQVGREHTLFMHLTLVPYIPTAGEVKTKPTQHSVKELLSIGIQPDVLICRSDRMIPPNERAKIALFCNVAERAVISLKDVNSIYQIPALLKSQGLDDFVCERFRLTCPEADLTEWEQVLYKQANPVGEVTIGMVGKYTELPDAYKSVNEALKHAGLTNRLSVSIKYIDSQDVETKGVEVLKGVDGILVPGGFGYRGVEGKIRTAQYARENKIPYLGICLGMQIALIEYARNVAGLTKANSSEFDKDCEQPVVALITEWQDAEGNTEVRTDESDLGGTMRLGAQQCHLVSGSRARELYGKETIEERHRHRYEVNNTLLPQIEKAGLKVTGLSADKKLVEIIEVPNHPWFVACQFHPEFTSTPRDGHPLFAGFVKAAYENHKKSVK.

Residues 1–266 (MATNYIFVTG…DDFVCERFRL (266 aa)) form an amidoligase domain region. Ser-14 lines the CTP pocket. Ser-14 provides a ligand contact to UTP. Residues 15-20 (SLGKGI) and Asp-72 contribute to the ATP site. 2 residues coordinate Mg(2+): Asp-72 and Glu-140. CTP is bound by residues 147 to 149 (DIE), 187 to 192 (KTKPTQ), and Lys-223. Residues 187 to 192 (KTKPTQ) and Lys-223 contribute to the UTP site. 239-241 (KDV) is an ATP binding site. The 252-residue stretch at 291–542 (TIGMVGKYTE…VKAAYENHKK (252 aa)) folds into the Glutamine amidotransferase type-1 domain. Gly-352 lines the L-glutamine pocket. Residue Cys-379 is the Nucleophile; for glutamine hydrolysis of the active site. L-glutamine-binding positions include 380–383 (LGMQ), Glu-403, and Arg-470. Catalysis depends on residues His-515 and Glu-517.

This sequence belongs to the CTP synthase family. In terms of assembly, homotetramer.

The catalysed reaction is UTP + L-glutamine + ATP + H2O = CTP + L-glutamate + ADP + phosphate + 2 H(+). The enzyme catalyses L-glutamine + H2O = L-glutamate + NH4(+). It catalyses the reaction UTP + NH4(+) + ATP = CTP + ADP + phosphate + 2 H(+). The protein operates within pyrimidine metabolism; CTP biosynthesis via de novo pathway; CTP from UDP: step 2/2. Its activity is regulated as follows. Allosterically activated by GTP, when glutamine is the substrate; GTP has no effect on the reaction when ammonia is the substrate. The allosteric effector GTP functions by stabilizing the protein conformation that binds the tetrahedral intermediate(s) formed during glutamine hydrolysis. Inhibited by the product CTP, via allosteric rather than competitive inhibition. In terms of biological role, catalyzes the ATP-dependent amination of UTP to CTP with either L-glutamine or ammonia as the source of nitrogen. Regulates intracellular CTP levels through interactions with the four ribonucleotide triphosphates. This is CTP synthase from Haemophilus influenzae (strain PittEE).